The primary structure comprises 166 residues: PR-toxin biosynthesis cluster protein 10 (166 aa).

Functionally, part of the gene cluster that mediates the biosynthesis of PR-toxin, a bicyclic sesquiterpene belonging to the eremophilane class and acting as a mycotoxin. The first step of the pathway is catalyzed by the aristolochene synthase which performs the cyclization of trans,trans-farnesyl diphosphate (FPP) to the bicyclic sesquiterpene aristolochene. Following the formation of aristolochene, the non-oxygenated aristolochene is converted to the trioxygenated intermediate eremofortin B, via 7-epi-neopetasone. This conversion appears to involve three enzymes, a hydroxysterol oxidase-like enzyme, the quinone-oxidase prx3 that forms the quinone-type-structure in the bicyclic nucleus of aristolochene with the C8-oxo group and the C-3 hydroxyl group, and the P450 monooxygenase prx9 that introduces the epoxide at the double bond between carbons 1 and 2. No monoxy or dioxy-intermediates have been reported to be released to the broth, so these three early oxidative reactions may be coupled together. Eremofortin B is further oxidized by another P450 monooxygenase, that introduces a second epoxide between carbons 7 and 11 prior to acetylation to eremofortin A by the acetyltransferase prx11. The second epoxidation may be performed by a second P450 monooxygenase. After the acetylation step, eremofortin A is converted to eremofortin C and then to PR-toxin. First the conversion of eremofortin A to eremofortin C proceeds by oxidation of the side chain of the molecule at C-12 and is catalyzed by the short-chain oxidoreductase prx1. The cytochrome P450 monooxygenase prx8 also plays a role in this step. The primary alcohol formed at C-12 is finally oxidized by the short-chain alcohol dehydrogenase prx4 that forms PR-toxin. This is PR-toxin biosynthesis cluster protein 10 from Penicillium rubens (strain ATCC 28089 / DSM 1075 / NRRL 1951 / Wisconsin 54-1255) (Penicillium chrysogenum).